The primary structure comprises 1120 residues: Cluster 41 polyketide synthase (1120 aa).

Positions 7 to 430 (PHDVAVVGMG…GTVSHAIIEK (424 aa)) constitute a Ketosynthase family 3 (KS3) domain. Catalysis depends on for beta-ketoacyl synthase activity residues Cys178, His313, and His353. Residues 539–796 (VWVFSGHGAQ…TSAISAAAED (258 aa)) form a malonyl-CoA:ACP transacylase (MAT) domain region. The For acyl/malonyl transferase activity role is filled by Ser625. Positions 804-943 (IKKILSMESR…IAMQWTSWRE (140 aa)) are ketoreductase (KR) domain. The 75-residue stretch at 1042–1116 (DSLSRQVREC…HIVKWLMEKT (75 aa)) folds into the Carrier domain. Ser1076 bears the O-(pantetheine 4'-phosphoryl)serine mark.

In terms of biological role, polyketide synthase; part of the gene cluster 41 that mediates the biosynthesis of an extracellular and diffusible metabolite that is able to stimulate colony sclerotial production. This is Cluster 41 polyketide synthase from Aspergillus flavus (strain ATCC 200026 / FGSC A1120 / IAM 13836 / NRRL 3357 / JCM 12722 / SRRC 167).